Consider the following 242-residue polypeptide: MKVSLFITCLSDVFFPQVGKSVVEIMNQCGVELDFPEGQTCCGQPAYNSGYQEDAKLAAKQMIKAFEHSEYIVTPSGSCASMVHHYYKEMFKGDSEWYEKAVHLADRTYELTDFLVNILGKNDWKSKLVEKAVFHQSCHMSRALGIKEEPLKLLSQVEGLDIKELPYCQDCCGFGGTFAVKMSSISETMVDEKIKHIEATEANLLIGADMGCLMNIGGRLRRENKNIQVLHVAEVLAKGLNK.

This sequence belongs to the LutA/YkgE family.

Its function is as follows. Is involved in L-lactate degradation and allows cells to grow with lactate as the sole carbon source. This chain is Lactate utilization protein A 2, found in Bacillus cereus (strain AH820).